Here is a 448-residue protein sequence, read N- to C-terminus: DNA repair protein RadA (448 aa).

The C4-type zinc finger occupies 10-27 (CQHCGFTSPKWLGKCVQC). 96–103 (GSPGVGKS) contacts ATP. The RadA KNRFG motif signature appears at 253–257 (KNRFG). The interval 351–448 (DVFINVSGGI…NVVGKIVEWM (98 aa)) is lon-protease-like.

The protein belongs to the RecA family. RadA subfamily.

Its function is as follows. DNA-dependent ATPase involved in processing of recombination intermediates, plays a role in repairing DNA breaks. Stimulates the branch migration of RecA-mediated strand transfer reactions, allowing the 3' invading strand to extend heteroduplex DNA faster. Binds ssDNA in the presence of ADP but not other nucleotides, has ATPase activity that is stimulated by ssDNA and various branched DNA structures, but inhibited by SSB. Does not have RecA's homology-searching function. This chain is DNA repair protein RadA, found in Helicobacter pylori (strain J99 / ATCC 700824) (Campylobacter pylori J99).